The chain runs to 306 residues: Putative NylC-analogous protein (306 aa).

It belongs to the peptidase S58 family.

The chain is Putative NylC-analogous protein from Agromyces sp. (strain KY5R).